Consider the following 292-residue polypeptide: NAD kinase (292 aa).

Asp72 serves as the catalytic Proton acceptor. Residues 72 to 73 (DG), 146 to 147 (NE), His157, Arg174, Asp176, and 187 to 192 (TAYALS) contribute to the NAD(+) site.

It belongs to the NAD kinase family. The cofactor is a divalent metal cation.

It localises to the cytoplasm. The enzyme catalyses NAD(+) + ATP = ADP + NADP(+) + H(+). Its function is as follows. Involved in the regulation of the intracellular balance of NAD and NADP, and is a key enzyme in the biosynthesis of NADP. Catalyzes specifically the phosphorylation on 2'-hydroxyl of the adenosine moiety of NAD to yield NADP. The sequence is that of NAD kinase from Shewanella oneidensis (strain ATCC 700550 / JCM 31522 / CIP 106686 / LMG 19005 / NCIMB 14063 / MR-1).